Consider the following 341-residue polypeptide: Heat-inducible transcription repressor HrcA (341 aa).

It belongs to the HrcA family.

Its function is as follows. Negative regulator of class I heat shock genes (grpE-dnaK-dnaJ and groELS operons). Prevents heat-shock induction of these operons. The protein is Heat-inducible transcription repressor HrcA of Carboxydothermus hydrogenoformans (strain ATCC BAA-161 / DSM 6008 / Z-2901).